The primary structure comprises 540 residues: DNA topoisomerase 1 (540 aa).

One can recognise a Toprim domain in the interval 1–110 (MELFIVESPT…NIKRAVFYEI (110 aa)). Residues glutamate 7 and aspartate 79 each coordinate Mg(2+). In terms of domain architecture, Topo IA-type catalytic spans 126–536 (NMNLVYAQFA…FMEKIFGKEL (411 aa)). Residues 161-166 (SAGRVQ) are interaction with DNA. Tyrosine 281 serves as the catalytic O-(5'-phospho-DNA)-tyrosine intermediate.

Belongs to the type IA topoisomerase family. In terms of assembly, monomer. The cofactor is Mg(2+).

The catalysed reaction is ATP-independent breakage of single-stranded DNA, followed by passage and rejoining.. Functionally, releases the supercoiling and torsional tension of DNA, which is introduced during the DNA replication and transcription, by transiently cleaving and rejoining one strand of the DNA duplex. Introduces a single-strand break via transesterification at a target site in duplex DNA. The scissile phosphodiester is attacked by the catalytic tyrosine of the enzyme, resulting in the formation of a DNA-(5'-phosphotyrosyl)-enzyme intermediate and the expulsion of a 3'-OH DNA strand. The free DNA strand then undergoes passage around the unbroken strand, thus removing DNA supercoils. Finally, in the religation step, the DNA 3'-OH attacks the covalent intermediate to expel the active-site tyrosine and restore the DNA phosphodiester backbone. This chain is DNA topoisomerase 1, found in Aquifex aeolicus (strain VF5).